The chain runs to 138 residues: Small ribosomal subunit protein uS12 (138 aa).

The tract at residues 33 to 55 (KEHTNVSSPQKRGVCTRVGTMTP) is disordered.

Belongs to the universal ribosomal protein uS12 family. As to quaternary structure, part of the 30S ribosomal subunit. Contacts proteins S8 and S17. May interact with IF1 in the 30S initiation complex. Interacts with BrxC.

Functionally, with S4 and S5 plays an important role in translational accuracy. Its function is as follows. Interacts with and stabilizes bases of the 16S rRNA that are involved in tRNA selection in the A site and with the mRNA backbone. Located at the interface of the 30S and 50S subunits, it traverses the body of the 30S subunit contacting proteins on the other side and probably holding the rRNA structure together. The combined cluster of proteins S8, S12 and S17 appears to hold together the shoulder and platform of the 30S subunit. The chain is Small ribosomal subunit protein uS12 (rpsL) from Bacillus subtilis (strain 168).